A 265-amino-acid chain; its full sequence is Small ribosomal subunit protein uS2 (265 aa).

Positions 226–265 (AAAPNSASVREEEFSADAADEGKGRRAPAKKGDKKADAAE) are disordered. Residues 245 to 265 (DEGKGRRAPAKKGDKKADAAE) show a composition bias toward basic and acidic residues.

It belongs to the universal ribosomal protein uS2 family.

The protein is Small ribosomal subunit protein uS2 of Xanthomonas axonopodis pv. citri (strain 306).